The following is a 208-amino-acid chain: Large ribosomal subunit protein uL3 (208 aa).

The interval 117 to 147 (FQGVIKRHGQSRGPMAHGSRYHRRPGSMGPV) is disordered.

Belongs to the universal ribosomal protein uL3 family. In terms of assembly, part of the 50S ribosomal subunit. Forms a cluster with proteins L14 and L19.

Functionally, one of the primary rRNA binding proteins, it binds directly near the 3'-end of the 23S rRNA, where it nucleates assembly of the 50S subunit. The polypeptide is Large ribosomal subunit protein uL3 (Streptococcus equi subsp. zooepidemicus (strain H70)).